A 205-amino-acid polypeptide reads, in one-letter code: Ribosomal RNA large subunit methyltransferase E (205 aa).

S-adenosyl-L-methionine is bound by residues Gly-60, Trp-62, Asp-80, Asp-96, and Asp-121. Lys-161 serves as the catalytic Proton acceptor.

Belongs to the class I-like SAM-binding methyltransferase superfamily. RNA methyltransferase RlmE family.

The protein localises to the cytoplasm. It catalyses the reaction uridine(2552) in 23S rRNA + S-adenosyl-L-methionine = 2'-O-methyluridine(2552) in 23S rRNA + S-adenosyl-L-homocysteine + H(+). Its function is as follows. Specifically methylates the uridine in position 2552 of 23S rRNA at the 2'-O position of the ribose in the fully assembled 50S ribosomal subunit. This Dechloromonas aromatica (strain RCB) protein is Ribosomal RNA large subunit methyltransferase E.